A 339-amino-acid polypeptide reads, in one-letter code: Heat-inducible transcription repressor HrcA (339 aa).

This sequence belongs to the HrcA family.

Negative regulator of class I heat shock genes (grpE-dnaK-dnaJ and groELS operons). Prevents heat-shock induction of these operons. This Cutibacterium acnes (strain DSM 16379 / KPA171202) (Propionibacterium acnes) protein is Heat-inducible transcription repressor HrcA.